Reading from the N-terminus, the 280-residue chain is Tumor necrosis factor ligand superfamily member 6 (280 aa).

The Cytoplasmic segment spans residues 1–80 (MQQPFNYPYP…KKRGNHSTGL (80 aa)). A disordered region spans residues 20–70 (SSPWAPPGTVLPCPTSVPRRPGQRRPPPPPPPPPLPPPPPSPLPPLPLPPL). Pro residues predominate over residues 43–69 (RRPPPPPPPPPLPPPPPSPLPPLPLPP). A helical; Signal-anchor for type II membrane protein membrane pass occupies residues 81 to 101 (CLLVMFFMVLVALVGLGLGMF). Over 102-280 (QLFHLQKELA…SQTFFGLYKL (179 aa)) the chain is Extracellular. Residues 117–155 (TSQKHTASSLEKQIGHPSPPPEKKEQRKVAHLTGKPNSR) are disordered. One can recognise a THD domain in the interval 144 to 280 (KVAHLTGKPN…SQTFFGLYKL (137 aa)). Residue Asn183 is glycosylated (N-linked (GlcNAc...) asparagine). Cys201 and Cys232 are oxidised to a cystine. Residues Asn249 and Asn259 are each glycosylated (N-linked (GlcNAc...) asparagine).

Belongs to the tumor necrosis factor family. In terms of assembly, homotrimer. Interacts with ARHGAP9, BAIAP2L1, BTK, CACNB3, CACNB4, CRK, DLG2, DNMBP, DOCK4, EPS8L3, FGR, FYB1, FYN, HCK, ITK, ITSN2, KALRN, LYN, MACC1, MIA, MPP4, MYO15A, NCF1, NCK1, NCK2, NCKIPSD, OSTF1, PIK3R1, PSTPIP1, RIMBP3C, SAMSN1, SH3GL3, SH3PXD2B, SH3PXD2A, SH3RF2, SKAP2, SNX33, SNX9, SORBS3, SPTA1, SRC, SRGAP1, SRGAP2, SRGAP3, TEC, TJP3 and YES1. In terms of processing, the soluble form derives from the membrane form by proteolytic processing. The membrane-bound form undergoes two successive intramembrane proteolytic cleavages. The first one is processed by ADAM10 producing an N-terminal fragment, which lacks the receptor-binding extracellular domain. This ADAM10-processed FasL (FasL APL) remnant form is still membrane anchored and further processed by SPPL2A that liberates the FasL intracellular domain (FasL ICD). FasL shedding by ADAM10 is a prerequisite for subsequent intramembrane cleavage by SPPL2A in T-cells. Phosphorylated by FGR on tyrosine residues; this is required for ubiquitination and subsequent internalization. Post-translationally, N-glycosylated. Glycosylation enhances apoptotic activity. In terms of processing, monoubiquitinated.

Its subcellular location is the cell membrane. It is found in the cytoplasmic vesicle lumen. The protein resides in the lysosome lumen. The protein localises to the secreted. It localises to the nucleus. Cytokine that binds to TNFRSF6/FAS, a receptor that transduces the apoptotic signal into cells. Involved in cytotoxic T-cell-mediated apoptosis, natural killer cell-mediated apoptosis and in T-cell development. Initiates fratricidal/suicidal activation-induced cell death (AICD) in antigen-activated T-cells contributing to the termination of immune responses. TNFRSF6/FAS-mediated apoptosis has also a role in the induction of peripheral tolerance. Binds to TNFRSF6B/DcR3, a decoy receptor that blocks apoptosis. Its function is as follows. Induces FAS-mediated activation of NF-kappa-B, initiating non-apoptotic signaling pathways. Can induce apoptosis but does not appear to be essential for this process. Functionally, cytoplasmic form induces gene transcription inhibition. This Macaca fascicularis (Crab-eating macaque) protein is Tumor necrosis factor ligand superfamily member 6 (FASLG).